We begin with the raw amino-acid sequence, 255 residues long: Membrane protein insertase YidC 2 (255 aa).

A signal peptide spans 1–20 (MKKKLGLLAMVVALMAITAG). A lipid anchor (N-palmitoyl cysteine) is attached at Cys-21. A lipid anchor (S-diacylglycerol cysteine) is attached at Cys-21. A run of 5 helical transmembrane segments spans residues 59–79 (YGLA…PLMI), 129–149 (LAGC…YHAI), 160–180 (FLWF…VAAI), 202–222 (MMLW…PAAL), and 223–243 (SLYW…IKGP).

This sequence belongs to the OXA1/ALB3/YidC family. Type 2 subfamily.

The protein localises to the cell membrane. Functionally, required for the insertion and/or proper folding and/or complex formation of integral membrane proteins into the membrane. Involved in integration of membrane proteins that insert both dependently and independently of the Sec translocase complex, as well as at least some lipoproteins. The chain is Membrane protein insertase YidC 2 from Bacillus anthracis.